The following is a 145-amino-acid chain: Cystatin-F (145 aa).

The signal sequence occupies residues 1–19; that stretch reads MRAAGTLLAFCCLVLSTTG. N-linked (GlcNAc...) asparagine glycosylation is present at Asn-62. The Secondary area of contact signature appears at 81-85; the sequence is QIVKG. The cysteines at positions 99 and 110 are disulfide-linked. Asn-115 is a glycosylation site (N-linked (GlcNAc...) asparagine). A disulfide bridge links Cys-124 with Cys-144.

The protein belongs to the cystatin family. Homodimer; disulfide-linked. Primarily expressed in peripheral blood cells and spleen.

The protein resides in the secreted. It is found in the cytoplasm. Inhibits papain and cathepsin L but with affinities lower than other cystatins. May play a role in immune regulation through inhibition of a unique target in the hematopoietic system. This chain is Cystatin-F (CST7), found in Homo sapiens (Human).